We begin with the raw amino-acid sequence, 260 residues long: Probable 6-oxopurine nucleoside phosphorylase (260 aa).

Phosphate contacts are provided by residues serine 9 and 49–50 (RH). Methionine 182 serves as a coordination point for substrate. Phosphate is bound at residue threonine 183. 206–208 (NMA) is a binding site for substrate.

It belongs to the PNP/MTAP phosphorylase family. MTAP subfamily. Homohexamer. Dimer of a homotrimer.

The catalysed reaction is a purine D-ribonucleoside + phosphate = a purine nucleobase + alpha-D-ribose 1-phosphate. Its pathway is purine metabolism; purine nucleoside salvage. In terms of biological role, purine nucleoside phosphorylase which is highly specific for 6-oxopurine nucleosides. Cleaves guanosine or inosine to respective bases and sugar-1-phosphate molecules. Involved in purine salvage. The sequence is that of Probable 6-oxopurine nucleoside phosphorylase from Moorella thermoacetica (strain ATCC 39073 / JCM 9320).